The following is a 1818-amino-acid chain: Nestin (1818 aa).

A coil 1B region spans residues W1–L14. The 135-residue stretch at W1–L135 folds into the IF rod domain. Residues Y15–E17 are linker 2. A coil 2B region spans residues R18 to L135. Residue S133 is modified to Phosphoserine. The interval Q136 to D1818 is tail. Phosphothreonine is present on residues T137 and T160. The residue at position 180 (S180) is a Phosphoserine. T210 is subject to Phosphothreonine. 4 disordered regions span residues E266–I309, A336–P355, H377–G451, and A480–Q787. Position 288 is a phosphoserine (S288). Residues P292–E303 are compositionally biased toward basic and acidic residues. Polar residues predominate over residues K382–L398. Residues S390 and S400 each carry the phosphoserine modification. Composition is skewed to basic and acidic residues over residues S400–V427 and L434–D443. S448 carries the post-translational modification Phosphoserine. Over residues E495–Q508 the composition is skewed to basic and acidic residues. S513 is subject to Phosphoserine. Composition is skewed to basic and acidic residues over residues T521–V536 and T565–Q586. Residue S591 is modified to Phosphoserine. 3 stretches are compositionally biased toward basic and acidic residues: residues T599–V614, T643–Q664, and T711–Q732. S737 carries the post-translational modification Phosphoserine. Positions E744 to K773 are enriched in basic and acidic residues. S803 and S824 each carry phosphoserine. The interval E866–G900 is disordered. Over residues L868–E886 the composition is skewed to basic and acidic residues. S915 and S957 each carry phosphoserine. The interval S945 to G998 is disordered. The span at Q986–L997 shows a compositional bias: polar residues. Residue K1043 forms a Glycyl lysine isopeptide (Lys-Gly) (interchain with G-Cter in SUMO1); alternate linkage. A Glycyl lysine isopeptide (Lys-Gly) (interchain with G-Cter in SUMO2); alternate cross-link involves residue K1043. S1052, S1063, S1073, S1123, S1134, S1162, and S1238 each carry phosphoserine. Disordered stretches follow at residues S1134–Q1262 and H1334–D1818. Composition is skewed to basic and acidic residues over residues V1342–G1361 and A1401–E1416. Residues Q1490–G1505 show a composition bias toward acidic residues. S1495, S1499, and S1523 each carry phosphoserine. The segment covering L1570 to G1579 has biased composition (acidic residues). Residues S1614 and S1623 each carry the phosphoserine modification. Over residues G1616–T1636 the composition is skewed to acidic residues. Polar residues predominate over residues G1686–P1697. S1698, S1700, S1791, S1814, and S1815 each carry phosphoserine. Over residues S1698–S1708 the composition is skewed to low complexity.

The protein belongs to the intermediate filament family. As to quaternary structure, interacts with FHOD3. Forms homodimers and homotetramers in vitro. In mixtures with other intermediate filament proteins such as vimentin and alpha-internexin, preferentially forms heterodimers which can assemble to form intermediate filaments if nestin does not exceed 25%. In terms of processing, constitutively phosphorylated. This increases during mitosis when the cytoplasmic intermediate filament network is reorganized.

Functionally, required for brain and eye development. Promotes the disassembly of phosphorylated vimentin intermediate filaments (IF) during mitosis and may play a role in the trafficking and distribution of IF proteins and other cellular factors to daughter cells during progenitor cell division. Required for survival, renewal and mitogen-stimulated proliferation of neural progenitor cells. The polypeptide is Nestin (Mesocricetus auratus (Golden hamster)).